The primary structure comprises 348 residues: MENLNPACASEDVKNALTSPIMMLSHGFILMIIVVSFITTALAVQTLWYKNVFPFCTKNLLLSAIVNGIFHQSTVAEIRLKTVYHLIRYSNAPCSILFQSSDCFYDNFLYYQTALFSSFYCVSLFLDRLFSLNPRSFYNSHQTLGFIVFLILQIICPIAIQFWTFHDSDYTSYVPMCNYPPASSVSGTKFYFINDSRIIIMGTIFMCSLFLYIHNKSREKRMIFNVYNTDSRYKSYENFLATRAVCIIIFSQITCLGITSFVPSIFNQFRQSISPDWFHLILAFMAGATYSNFFLPLIVIYETQLIIAHRHKLIKKLKSQKEEFSDHFASLDFVWEREANKKKTQLVQ.

6 helical membrane passes run 28–48, 108–130, 145–165, 193–213, 246–266, and 280–300; these read FILMIIVVSFITTALAVQTLW, FLYYQTALFSSFYCVSLFLDRLF, GFIVFLILQIICPIAIQFWTF, INDSRIIIMGTIFMCSLFLYI, CIIIFSQITCLGITSFVPSIF, and LILAFMAGATYSNFFLPLIVI.

It belongs to the nematode receptor-like protein sra family.

Its subcellular location is the membrane. The sequence is that of Serpentine receptor class alpha-29 (sra-29) from Caenorhabditis elegans.